Consider the following 628-residue polypeptide: Beta-galactosidase large subunit (628 aa).

The active-site Proton donor is the Glu-468. Glu-536 functions as the Nucleophile in the catalytic mechanism.

It belongs to the glycosyl hydrolase 2 family. Heterodimer of a large (LacL) and a small subunit (LacM).

The catalysed reaction is Hydrolysis of terminal non-reducing beta-D-galactose residues in beta-D-galactosides.. Its function is as follows. Component of a beta-galactosidase. This is Beta-galactosidase large subunit from Lactobacillus helveticus (Lactobacillus suntoryeus).